The sequence spans 214 residues: Leucyl/phenylalanyl-tRNA--protein transferase (214 aa).

The protein belongs to the L/F-transferase family.

It is found in the cytoplasm. It carries out the reaction N-terminal L-lysyl-[protein] + L-leucyl-tRNA(Leu) = N-terminal L-leucyl-L-lysyl-[protein] + tRNA(Leu) + H(+). The enzyme catalyses N-terminal L-arginyl-[protein] + L-leucyl-tRNA(Leu) = N-terminal L-leucyl-L-arginyl-[protein] + tRNA(Leu) + H(+). The catalysed reaction is L-phenylalanyl-tRNA(Phe) + an N-terminal L-alpha-aminoacyl-[protein] = an N-terminal L-phenylalanyl-L-alpha-aminoacyl-[protein] + tRNA(Phe). Functionally, functions in the N-end rule pathway of protein degradation where it conjugates Leu, Phe and, less efficiently, Met from aminoacyl-tRNAs to the N-termini of proteins containing an N-terminal arginine or lysine. The protein is Leucyl/phenylalanyl-tRNA--protein transferase of Cereibacter sphaeroides (strain ATCC 17023 / DSM 158 / JCM 6121 / CCUG 31486 / LMG 2827 / NBRC 12203 / NCIMB 8253 / ATH 2.4.1.) (Rhodobacter sphaeroides).